The following is a 365-amino-acid chain: DNA replication and repair protein RecF (365 aa).

30–37 is a binding site for ATP; the sequence is GRNAQGKT.

This sequence belongs to the RecF family.

It is found in the cytoplasm. Functionally, the RecF protein is involved in DNA metabolism; it is required for DNA replication and normal SOS inducibility. RecF binds preferentially to single-stranded, linear DNA. It also seems to bind ATP. The chain is DNA replication and repair protein RecF from Streptococcus pneumoniae (strain 70585).